Here is a 437-residue protein sequence, read N- to C-terminus: GTPase Obg (437 aa).

The 159-residue stretch at serine 2–leucine 160 folds into the Obg domain. An OBG-type G domain is found at alanine 161–glutamate 338. Residues glycine 167 to serine 174, phenylalanine 192 to valine 196, aspartate 214 to glycine 217, asparagine 284 to aspartate 287, and serine 319 to isoleucine 321 each bind GTP. Mg(2+) is bound by residues serine 174 and threonine 194. One can recognise an OCT domain in the interval glycine 359 to aspartate 437.

The protein belongs to the TRAFAC class OBG-HflX-like GTPase superfamily. OBG GTPase family. Monomer. Requires Mg(2+) as cofactor.

It localises to the cytoplasm. Functionally, an essential GTPase which binds GTP, GDP and possibly (p)ppGpp with moderate affinity, with high nucleotide exchange rates and a fairly low GTP hydrolysis rate. Plays a role in control of the cell cycle, stress response, ribosome biogenesis and in those bacteria that undergo differentiation, in morphogenesis control. The protein is GTPase Obg of Streptococcus suis (strain 05ZYH33).